We begin with the raw amino-acid sequence, 88 residues long: Small ribosomal subunit protein bS20 (88 aa).

Belongs to the bacterial ribosomal protein bS20 family.

Its function is as follows. Binds directly to 16S ribosomal RNA. The sequence is that of Small ribosomal subunit protein bS20 from Syntrophomonas wolfei subsp. wolfei (strain DSM 2245B / Goettingen).